Here is a 233-residue protein sequence, read N- to C-terminus: Large ribosomal subunit protein uL1 (233 aa).

This sequence belongs to the universal ribosomal protein uL1 family. Part of the 50S ribosomal subunit.

Its function is as follows. Binds directly to 23S rRNA. The L1 stalk is quite mobile in the ribosome, and is involved in E site tRNA release. Protein L1 is also a translational repressor protein, it controls the translation of the L11 operon by binding to its mRNA. The polypeptide is Large ribosomal subunit protein uL1 (Psychrobacter cryohalolentis (strain ATCC BAA-1226 / DSM 17306 / VKM B-2378 / K5)).